We begin with the raw amino-acid sequence, 377 residues long: Chaperone protein DnaJ (377 aa).

Residues 5–70 (DYYEVLGLQK…QKRAAYDQYG (66 aa)) form the J domain. A CR-type zinc finger spans residues 134–212 (GCKKDIRLST…CHGDGRVQKA (79 aa)). Zn(2+) contacts are provided by cysteine 147, cysteine 150, cysteine 164, cysteine 167, cysteine 186, cysteine 189, cysteine 200, and cysteine 203. 4 CXXCXGXG motif repeats span residues 147 to 154 (CDNCHGTG), 164 to 171 (CPHCHGAG), 186 to 193 (CPSCHGTG), and 200 to 207 (CHSCHGDG).

Belongs to the DnaJ family. In terms of assembly, homodimer. Requires Zn(2+) as cofactor.

It localises to the cytoplasm. Its function is as follows. Participates actively in the response to hyperosmotic and heat shock by preventing the aggregation of stress-denatured proteins and by disaggregating proteins, also in an autonomous, DnaK-independent fashion. Unfolded proteins bind initially to DnaJ; upon interaction with the DnaJ-bound protein, DnaK hydrolyzes its bound ATP, resulting in the formation of a stable complex. GrpE releases ADP from DnaK; ATP binding to DnaK triggers the release of the substrate protein, thus completing the reaction cycle. Several rounds of ATP-dependent interactions between DnaJ, DnaK and GrpE are required for fully efficient folding. Also involved, together with DnaK and GrpE, in the DNA replication of plasmids through activation of initiation proteins. The chain is Chaperone protein DnaJ from Haemophilus ducreyi (strain 35000HP / ATCC 700724).